We begin with the raw amino-acid sequence, 506 residues long: GTPase Der (506 aa).

2 consecutive EngA-type G domains span residues 3 to 166 (PVVA…GEQL) and 218 to 391 (IKIA…ACAT). GTP is bound by residues 9 to 16 (GRPNVGKS), 56 to 60 (DTGGI), 118 to 121 (NKTD), 224 to 231 (GRPNVGKS), 271 to 275 (DTAGV), and 336 to 339 (NKWD). The KH-like domain maps to 392–476 (QKTSTSMLTR…PIRIQFQEGN (85 aa)).

This sequence belongs to the TRAFAC class TrmE-Era-EngA-EngB-Septin-like GTPase superfamily. EngA (Der) GTPase family. Associates with the 50S ribosomal subunit.

Its function is as follows. GTPase that plays an essential role in the late steps of ribosome biogenesis. The sequence is that of GTPase Der from Actinobacillus pleuropneumoniae serotype 5b (strain L20).